The chain runs to 84 residues: Beta-defensin 119 (84 aa).

An N-terminal signal peptide occupies residues 1-21 (MKLLYLFLAILLVIEEPVISG). 3 cysteine pairs are disulfide-bonded: cysteine 28-cysteine 55, cysteine 35-cysteine 49, and cysteine 39-cysteine 56.

The protein belongs to the beta-defensin family.

Its subcellular location is the secreted. Has antibacterial activity. This Pongo pygmaeus (Bornean orangutan) protein is Beta-defensin 119 (DEFB119).